Consider the following 587-residue polypeptide: Probable terpene synthase 12 (587 aa).

Mg(2+)-binding residues include Asp338, Asp342, and Glu489. The DDXXD motif signature appears at 338 to 342; the sequence is DDVYD.

It belongs to the terpene synthase family. Requires Mg(2+) as cofactor.

Its function is as follows. Probable sesquiterpene synthase. The polypeptide is Probable terpene synthase 12 (TPS12) (Ricinus communis (Castor bean)).